A 414-amino-acid chain; its full sequence is uncharacterized protein (414 aa).

Disordered stretches follow at residues 136–168 (SSKS…TVPT), 298–322 (KNFP…SYHR), and 350–382 (PPHS…MSTS).

This is an uncharacterized protein from Macaca fascicularis (Crab-eating macaque).